A 671-amino-acid chain; its full sequence is Zinc finger and BTB domain-containing protein 16-A (671 aa).

A BTB domain is found at 34–96 (CDVVIMVDSQ…AYTATLQAKV (63 aa)). Disordered regions lie at residues 130 to 167 (ENDTEVNMNDGGTEDDEERKGRHGRNLVGSKKHSTEES) and 248 to 289 (VDES…RSSV). Residues 270-279 (RSGEPDKNRD) are compositionally biased toward basic and acidic residues. Thr-283 carries the phosphothreonine modification. C2H2-type zinc fingers lie at residues 401–423 (ERCNVCGAELPDNEAIEQHRKLH), 429–451 (YGCELCGKRFLDSLRLRMHLLSH), 458–480 (IVCDQCGAQFQKEDALEAHRQIH), 487–509 (IFCLLCGKRFQTQTALQQHMEVH), 515–537 (YICSECNRTFPSHTALKRHLRSH), 544–566 (FECEFCGSCFRDESTLKGHKRIH), 572–594 (YECNGCGKKFSLKHQLETHYRVH), 600–622 (FECKLCHQRSRDYSAMIKHLRTH), and 628–650 (YQCTICLEYCPSLSAMQKHMKGH).

Belongs to the krueppel C2H2-type zinc-finger protein family. In terms of assembly, interacts with btbd6a (via BTB domain). Post-translationally, polyubiquitinated, leading to its proteasomal degradation. In terms of tissue distribution, during early stages of primary neurogenesis, expressed in the neural epithelium, with highest levels in the forebrain and midbrain. Also expressed in a posterior-to-anterior gradient in the caudal neural plate at the 3-6 somite stage.

The protein resides in the nucleus. It localises to the cytoplasm. The protein operates within protein modification; protein ubiquitination. In terms of biological role, probable transcription factor. Probable substrate-recognition component of an E3 ubiquitin-protein ligase complex which mediates the ubiquitination and subsequent proteasomal degradation of target proteins. Inhibits neurogenesis. This chain is Zinc finger and BTB domain-containing protein 16-A, found in Danio rerio (Zebrafish).